The sequence spans 320 residues: Cytochrome f (320 aa).

The first 35 residues, 1-35, serve as a signal peptide directing secretion; sequence MQNRKTFSWVKEQMTRSIYVSIMIYVITRASISNA. Residues Y36, C56, C59, and H60 each contribute to the heme site. A helical membrane pass occupies residues 286–306; it reads VQGLLFFLASVILAQIFLVLK.

The protein belongs to the cytochrome f family. As to quaternary structure, the 4 large subunits of the cytochrome b6-f complex are cytochrome b6, subunit IV (17 kDa polypeptide, petD), cytochrome f and the Rieske protein, while the 4 small subunits are PetG, PetL, PetM and PetN. The complex functions as a dimer. It depends on heme as a cofactor.

It localises to the plastid. The protein resides in the chloroplast thylakoid membrane. Component of the cytochrome b6-f complex, which mediates electron transfer between photosystem II (PSII) and photosystem I (PSI), cyclic electron flow around PSI, and state transitions. This is Cytochrome f from Phalaenopsis aphrodite subsp. formosana (Moth orchid).